Reading from the N-terminus, the 208-residue chain is Large ribosomal subunit protein uL3 (208 aa).

The protein belongs to the universal ribosomal protein uL3 family. In terms of assembly, part of the 50S ribosomal subunit. Forms a cluster with proteins L14 and L19.

Functionally, one of the primary rRNA binding proteins, it binds directly near the 3'-end of the 23S rRNA, where it nucleates assembly of the 50S subunit. The sequence is that of Large ribosomal subunit protein uL3 from Desulfosudis oleivorans (strain DSM 6200 / JCM 39069 / Hxd3) (Desulfococcus oleovorans).